A 255-amino-acid polypeptide reads, in one-letter code: Ribosome maturation factor RimP (255 aa).

A disordered region spans residues 177 to 255 (LRRGSAPPQD…ARLKNRDTLH (79 aa)). The span at 186–202 (DGEDVDEEAGEAPEDEV) shows a compositional bias: acidic residues. The segment covering 216–230 (PKMDKKSDKKSDKPV) has biased composition (basic and acidic residues).

Belongs to the RimP family.

The protein resides in the cytoplasm. Required for maturation of 30S ribosomal subunits. This is Ribosome maturation factor RimP from Methylorubrum populi (strain ATCC BAA-705 / NCIMB 13946 / BJ001) (Methylobacterium populi).